A 268-amino-acid chain; its full sequence is uncharacterized protein (268 aa).

The helical transmembrane segment at 150–172 (LYSIADFLAYTFTYFYLATVGLA) threads the bilayer.

It localises to the host membrane. This is an uncharacterized protein from Sulfolobus islandicus rod-shaped virus 1 (SIRV-1).